The chain runs to 714 residues: Protein ESC8 (714 aa).

Disordered stretches follow at residues 598–674 and 694–714; these read APTG…ELHN and RQLQ…RKGL. Positions 610–624 are enriched in polar residues; it reads TSSQRRTTVHYSSDV. The span at 628–650 shows a compositional bias: acidic residues; it reads VSEESENEVDIDVSDDYDSEYLS. Residues 654-674 are compositionally biased toward basic and acidic residues; the sequence is TLTRKGEDRTDKSFGKRELHN. A compositionally biased stretch (basic residues) spans 704–714; that stretch reads RSLRRNARKGL.

In terms of assembly, interacts with GAL11 and SIR2.

The protein localises to the cytoplasm. Its subcellular location is the nucleus. Functionally, involved in HMR and telomere silencing via the recruitment or stabilizing of the SIR (silent information regulators) complex. In Saccharomyces cerevisiae (strain ATCC 204508 / S288c) (Baker's yeast), this protein is Protein ESC8 (ESC8).